A 515-amino-acid chain; its full sequence is Integrator complex subunit 14 (515 aa).

The 203-residue stretch at 2–204 (PTVVVMDVSL…KNVQSMFGKL (203 aa)) folds into the VWFA domain. Positions 10, 12, and 86 each coordinate Mg(2+). N6-acetyllysine is present on Lys-418.

This sequence belongs to the Integrator subunit 14 family. As to quaternary structure, component of the Integrator complex, composed of core subunits INTS1, INTS2, INTS3, INTS4, INTS5, INTS6, INTS7, INTS8, INTS9/RC74, INTS10, INTS11/CPSF3L, INTS12, INTS13, INTS14 and INTS15. The core complex associates with protein phosphatase 2A subunits PPP2CA and PPP2R1A, to form the Integrator-PP2A (INTAC) complex. INTS14 is part of the tail subcomplex, composed of INTS10, INTS13, INTS14 and INTS15.

It is found in the nucleus. In terms of biological role, component of the integrator complex, a multiprotein complex that terminates RNA polymerase II (Pol II) transcription in the promoter-proximal region of genes. The integrator complex provides a quality checkpoint during transcription elongation by driving premature transcription termination of transcripts that are unfavorably configured for transcriptional elongation: the complex terminates transcription by (1) catalyzing dephosphorylation of the C-terminal domain (CTD) of Pol II subunit POLR2A/RPB1 and SUPT5H/SPT5, (2) degrading the exiting nascent RNA transcript via endonuclease activity and (3) promoting the release of Pol II from bound DNA. The integrator complex is also involved in terminating the synthesis of non-coding Pol II transcripts, such as enhancer RNAs (eRNAs), small nuclear RNAs (snRNAs), telomerase RNAs and long non-coding RNAs (lncRNAs). Within the integrator complex, INTS14 is part of the integrator tail module that acts as a platform for the recruitment of transcription factors at promoters. This Mus musculus (Mouse) protein is Integrator complex subunit 14.